The following is a 176-amino-acid chain: Macro domain-containing protein mll7730 (176 aa).

Residues 1 to 174 form the Macro domain; sequence MSKALDRIRI…LYLRAVAALR (174 aa).

It belongs to the MacroD-type family.

This Mesorhizobium japonicum (strain LMG 29417 / CECT 9101 / MAFF 303099) (Mesorhizobium loti (strain MAFF 303099)) protein is Macro domain-containing protein mll7730.